A 117-amino-acid chain; its full sequence is NADH-ubiquinone oxidoreductase chain 3 (117 aa).

The next 3 helical transmembrane spans lie at 1 to 21 (MLSL…LLLV), 56 to 76 (FFLV…ILPY), and 86 to 106 (TFYN…GLMY).

This sequence belongs to the complex I subunit 3 family.

Its subcellular location is the mitochondrion membrane. The catalysed reaction is a ubiquinone + NADH + 5 H(+)(in) = a ubiquinol + NAD(+) + 4 H(+)(out). Its function is as follows. Core subunit of the mitochondrial membrane respiratory chain NADH dehydrogenase (Complex I) that is believed to belong to the minimal assembly required for catalysis. Complex I functions in the transfer of electrons from NADH to the respiratory chain. The immediate electron acceptor for the enzyme is believed to be ubiquinone. This Branchiostoma lanceolatum (Common lancelet) protein is NADH-ubiquinone oxidoreductase chain 3 (ND3).